The following is a 270-amino-acid chain: ATP synthase subunit a (270 aa).

Transmembrane regions (helical) follow at residues 40–60 (IDSL…FYAV), 98–118 (IAPL…MDLV), 143–163 (DVNI…YYSI), 208–228 (LFGN…MLPW), and 239–259 (AIFH…LTIV).

The protein belongs to the ATPase A chain family. As to quaternary structure, F-type ATPases have 2 components, CF(1) - the catalytic core - and CF(0) - the membrane proton channel. CF(1) has five subunits: alpha(3), beta(3), gamma(1), delta(1), epsilon(1). CF(0) has three main subunits: a(1), b(2) and c(9-12). The alpha and beta chains form an alternating ring which encloses part of the gamma chain. CF(1) is attached to CF(0) by a central stalk formed by the gamma and epsilon chains, while a peripheral stalk is formed by the delta and b chains.

It localises to the cell inner membrane. Its function is as follows. Key component of the proton channel; it plays a direct role in the translocation of protons across the membrane. The polypeptide is ATP synthase subunit a (Vibrio vulnificus (strain CMCP6)).